The primary structure comprises 321 residues: NADH-ubiquinone oxidoreductase chain 1 (321 aa).

8 consecutive transmembrane segments (helical) span residues 5–25 (LVTLNSLMYIIPILIAVAFLT), 74–94 (LLILSPLLAITAAMLIWAPIP), 104–124 (LGLLSILAISGMAVNSILWAG), 151–171 (GIILLSTLVLTGGFTIQLLTI), 175–195 (YTWLLTTSWPLTMMWFISTLA), 227–247 (FFLAEYANIITMNLLTCILFI), 256–276 (ELFLANLIAKTTILCLSFLWI), and 296–316 (FLPMTMALCLLHASLSISISG).

The protein belongs to the complex I subunit 1 family.

Its subcellular location is the mitochondrion inner membrane. The enzyme catalyses a ubiquinone + NADH + 5 H(+)(in) = a ubiquinol + NAD(+) + 4 H(+)(out). In terms of biological role, core subunit of the mitochondrial membrane respiratory chain NADH dehydrogenase (Complex I) that is believed to belong to the minimal assembly required for catalysis. Complex I functions in the transfer of electrons from NADH to the respiratory chain. The immediate electron acceptor for the enzyme is believed to be ubiquinone. This chain is NADH-ubiquinone oxidoreductase chain 1 (MT-ND1), found in Varanus baritji (Black-spotted ridge-tailed monitor).